The following is a 370-amino-acid chain: Phospho-N-acetylmuramoyl-pentapeptide-transferase (370 aa).

Helical transmembrane passes span 29 to 49, 70 to 90, 93 to 113, 133 to 153, 177 to 197, 209 to 229, 251 to 271, 273 to 293, 298 to 318, and 349 to 369; these read AGLTSMFITFIFGKSLISFLL, GTPTMGGLIMILSLTISTLLW, LSNWNVILLLISAILFAGLGF, KFIVTILFAVTITTLYFYYTG, GPVWNLGIFAVPFAIIVLIGS, GLASGTVVISTATFALIAYVS, VFLAGLSGALLGFLWFNCHPA, VFMGDTGSLFLGSTLGLVAIM, ILLVILGGIFVAEAVSVILQV, and VIRFWIIGIILAIITLSTLKI.

This sequence belongs to the glycosyltransferase 4 family. MraY subfamily. Mg(2+) serves as cofactor.

Its subcellular location is the cell inner membrane. It catalyses the reaction UDP-N-acetyl-alpha-D-muramoyl-L-alanyl-gamma-D-glutamyl-meso-2,6-diaminopimeloyl-D-alanyl-D-alanine + di-trans,octa-cis-undecaprenyl phosphate = di-trans,octa-cis-undecaprenyl diphospho-N-acetyl-alpha-D-muramoyl-L-alanyl-D-glutamyl-meso-2,6-diaminopimeloyl-D-alanyl-D-alanine + UMP. It functions in the pathway cell wall biogenesis; peptidoglycan biosynthesis. In terms of biological role, catalyzes the initial step of the lipid cycle reactions in the biosynthesis of the cell wall peptidoglycan: transfers peptidoglycan precursor phospho-MurNAc-pentapeptide from UDP-MurNAc-pentapeptide onto the lipid carrier undecaprenyl phosphate, yielding undecaprenyl-pyrophosphoryl-MurNAc-pentapeptide, known as lipid I. This is Phospho-N-acetylmuramoyl-pentapeptide-transferase from Leptospira biflexa serovar Patoc (strain Patoc 1 / Ames).